We begin with the raw amino-acid sequence, 526 residues long: Exodeoxyribonuclease 7 large subunit (526 aa).

The interval 497-526 is disordered; sequence AMTTEGGTPPGGAKKRSTKPAEPTKQGSLF.

It belongs to the XseA family. In terms of assembly, heterooligomer composed of large and small subunits.

The protein localises to the cytoplasm. It catalyses the reaction Exonucleolytic cleavage in either 5'- to 3'- or 3'- to 5'-direction to yield nucleoside 5'-phosphates.. Bidirectionally degrades single-stranded DNA into large acid-insoluble oligonucleotides, which are then degraded further into small acid-soluble oligonucleotides. The polypeptide is Exodeoxyribonuclease 7 large subunit (Rhizobium etli (strain ATCC 51251 / DSM 11541 / JCM 21823 / NBRC 15573 / CFN 42)).